Here is a 644-residue protein sequence, read N- to C-terminus: Chaperone protein DnaK (644 aa).

Threonine 199 carries the phosphothreonine; by autocatalysis modification. The tract at residues 605-644 is disordered; it reads KKSSEGQAAQGQTQSQESTKPAEEGVVDAEFEEVKEEDKK. Residues 609–623 show a composition bias toward polar residues; it reads EGQAAQGQTQSQEST. Over residues 629-644 the composition is skewed to acidic residues; the sequence is GVVDAEFEEVKEEDKK.

It belongs to the heat shock protein 70 family.

In terms of biological role, acts as a chaperone. The sequence is that of Chaperone protein DnaK from Legionella pneumophila subsp. pneumophila (strain Philadelphia 1 / ATCC 33152 / DSM 7513).